The sequence spans 159 residues: Carbohydrate sulfotransferase 15 (159 aa).

At 1–159 (SGTTDFYRRI…YQPHNERLVK (159 aa)) the chain is on the lumenal side. N-linked (GlcNAc...) asparagine glycans are attached at residues Asn42 and Asn112.

This sequence belongs to the sulfotransferase 1 family. A divalent metal cation is required as a cofactor. Glutathione serves as cofactor.

The protein localises to the golgi apparatus membrane. The enzyme catalyses dermatan 4'-sulfate + n 3'-phosphoadenylyl sulfate = dermatan 4',6'-bissulfate + n adenosine 3',5'-bisphosphate + n H(+). The catalysed reaction is chondroitin 4'-sulfate + n 3'-phosphoadenylyl sulfate = chondroitin 4',6'-bissulfate + n adenosine 3',5'-bisphosphate + n H(+). Its function is as follows. Sulfotransferase that transfers sulfate from 3'-phosphoadenosine 5'-phosphosulfate (PAPS) to the C-6 hydroxyl group of the GalNAc 4-sulfate residue of chondroitin sulfate A and forms chondroitin sulfate E containing GlcA-GalNAc(4,6-SO(4)) repeating units. This Nototodarus sloanii (Wellington flying squid) protein is Carbohydrate sulfotransferase 15 (GALNAC4S6ST).